The chain runs to 433 residues: 23S rRNA (uracil(1939)-C(5))-methyltransferase RlmD (433 aa).

A TRAM domain is found at 10-68 (RTTTRQIITVSVNDLDSFGQGVARHNGKTLFIPGLLPQENAEVTVTEDKKQYARAKVVR). Interaction with RNA stretches follow at residues 23–40 (DLDSFGQGVARHNGKTLF) and 58–63 (KKQYAR). Residues Cys-81, Cys-87, Cys-90, and Cys-162 each coordinate [4Fe-4S] cluster. The S-adenosyl-L-methionine site is built by Gln-265, Phe-294, Asn-299, Glu-315, Asn-342, and Asp-363. Residue Cys-389 is the Nucleophile of the active site.

This sequence belongs to the class I-like SAM-binding methyltransferase superfamily. RNA M5U methyltransferase family. RlmD subfamily.

It carries out the reaction uridine(1939) in 23S rRNA + S-adenosyl-L-methionine = 5-methyluridine(1939) in 23S rRNA + S-adenosyl-L-homocysteine + H(+). Functionally, catalyzes the formation of 5-methyl-uridine at position 1939 (m5U1939) in 23S rRNA. The chain is 23S rRNA (uracil(1939)-C(5))-methyltransferase RlmD from Escherichia coli (strain K12).